The chain runs to 71 residues: Cell division protein ZapB (71 aa).

Residues 5–67 adopt a coiled-coil conformation; sequence LEVLEQLESK…RALLGKMDQM (63 aa).

It belongs to the ZapB family. In terms of assembly, homodimer. The ends of the coiled-coil dimer bind to each other, forming polymers. Interacts with FtsZ.

The protein resides in the cytoplasm. In terms of biological role, non-essential, abundant cell division factor that is required for proper Z-ring formation. It is recruited early to the divisome by direct interaction with FtsZ, stimulating Z-ring assembly and thereby promoting cell division earlier in the cell cycle. Its recruitment to the Z-ring requires functional FtsA or ZipA. This chain is Cell division protein ZapB, found in Aeromonas hydrophila subsp. hydrophila (strain ATCC 7966 / DSM 30187 / BCRC 13018 / CCUG 14551 / JCM 1027 / KCTC 2358 / NCIMB 9240 / NCTC 8049).